We begin with the raw amino-acid sequence, 2210 residues long: RNA-directed RNA polymerase L (2210 aa).

An endonuclease region spans residues 26–285 (KAIFLSQTKL…KCAIMSEEDS (260 aa)). Mn(2+) contacts are provided by E51, D88, and E101. K114 is a catalytic residue. The RdRp catalytic domain occupies 1163-1359 (LDMKSVVRQG…FLSDKLNKFV (197 aa)). D1319 lines the Mg(2+) pocket.

It belongs to the Bunyavirales RNA polymerase family. Homomultimer; the oligomeric structure is essential for the polymerase activity. Interacts with nucleoprotein N. Interacts with protein Z; this interaction inhibits viral transcription and replication, Z partially blocks the product exit tunnel for the releasing nascent RNA product. It depends on Mn(2+) as a cofactor. Requires Mg(2+) as cofactor.

It localises to the virion. The protein localises to the host cytoplasm. The catalysed reaction is RNA(n) + a ribonucleoside 5'-triphosphate = RNA(n+1) + diphosphate. In terms of biological role, RNA-dependent RNA polymerase, which is responsible for the replication and transcription of the viral RNA genome using antigenomic RNA as an intermediate. During transcription, synthesizes subgenomic RNAs and assures their capping by a cap-snatching mechanism, which involves the endonuclease activity cleaving the host capped pre-mRNAs. These short capped RNAs are then used as primers for viral transcription. The 3'-end of subgenomic mRNAs molecules are heterogeneous and not polyadenylated. The replicase function is to direct synthesis of antigenomic and genomic RNA which are encapsidated and non capped. As a consequence of the use of the same enzyme for both transcription and replication, these mechanisms need to be well coordinated. These processes may be regulated by proteins N and Z in a dose-dependent manner. Z protein inhibits the viral polymerase L und thus the viral transcription and RNA synthesis. This chain is RNA-directed RNA polymerase L, found in Sigmodon alstoni (PIRV).